The primary structure comprises 237 residues: tRNA (guanine-N(7)-)-methyltransferase (237 aa).

Residues E56, E81, D108, and D131 each contribute to the S-adenosyl-L-methionine site. D131 is an active-site residue. Residues K135, D167, and 204-207 each bind substrate; that span reads TKFE.

Belongs to the class I-like SAM-binding methyltransferase superfamily. TrmB family.

It carries out the reaction guanosine(46) in tRNA + S-adenosyl-L-methionine = N(7)-methylguanosine(46) in tRNA + S-adenosyl-L-homocysteine. It functions in the pathway tRNA modification; N(7)-methylguanine-tRNA biosynthesis. In terms of biological role, catalyzes the formation of N(7)-methylguanine at position 46 (m7G46) in tRNA. In Legionella pneumophila (strain Paris), this protein is tRNA (guanine-N(7)-)-methyltransferase.